Here is a 314-residue protein sequence, read N- to C-terminus: Leucine-rich repeat-containing protein 52 (314 aa).

Residues 1-23 form the signal peptide; the sequence is MSLASGPSSKLLLFSLGMGLVSG. The LRRNT domain occupies 24–53; sequence SKCPNKCVCQDQEVACIDLHLTEYPADIPL. Residues 24-244 are Extracellular-facing; it reads SKCPNKCVCQ…MCITHLDQQD (221 aa). Disulfide bonds link Cys26/Cys32 and Cys30/Cys39. LRR repeat units lie at residues 54–73, 78–99, 102–123, 126–148, and 151–172; these read NTRR…ALQL, DLVY…TFIG, RLIY…SFSV, NLVR…VFAN, and SLRY…GFHH. 3 N-linked (GlcNAc...) asparagine glycosylation sites follow: Asn112, Asn131, and Asn148. Positions 184 to 238 constitute an LRRCT domain; the sequence is NPWICNCSFLDFTIHLLVSHMDHPDAQNATCTEPAELKGWPITKVGNPLQYMCIT. Disulfide bonds link Cys188–Cys214 and Cys190–Cys236. Residues Asn189 and Asn211 are each glycosylated (N-linked (GlcNAc...) asparagine). The chain crosses the membrane as a helical span at residues 245–265; the sequence is YIFLLLIGFCIFAAGTVAAWL. The Cytoplasmic segment spans residues 266 to 314; the sequence is TGVCAVLYQNALRTSSGDDTEDETGSRFANQIFRSNTHLGPIRRFPELI.

Interacts with KCNMA1. Interacts with KCNU1; this interaction may be required for LRRC52 stability and changes the channel gating properties. Post-translationally, N-glycosylated. As to expression, testis-specific (at protein level). At the mRNA level, also detected in kidney, ventricle, spinal cord and skeletal muscle, although at lower levels compared to testis. Expression in testis at the protein level requires the presence of KCNU1.

It is found in the cell membrane. Its function is as follows. Auxiliary protein of the large-conductance, voltage and calcium-activated potassium channel (BK alpha). Modulates gating properties by producing a marked shift in the BK channel's voltage dependence of activation in the hyperpolarizing direction, and in the absence of calcium. KCNU1 channel auxiliary protein. Modulates KCNU1 gating properties, shifting KCNU1 gating to more negative potentials at a given pH. The sequence is that of Leucine-rich repeat-containing protein 52 (Lrrc52) from Mus musculus (Mouse).